A 348-amino-acid chain; its full sequence is NADH-ubiquinone oxidoreductase chain 2 (348 aa).

Transmembrane regions (helical) follow at residues 3 to 23 (PTVL…TFIG), 25 to 45 (HWLL…PLMI), 59 to 79 (YFIT…TNAW), 95 to 115 (ATLA…HFWL), 149 to 171 (LNSN…GGLN), 178 to 198 (ILAY…HYSP), 199 to 219 (SLTL…FLLF), 242 to 262 (VIAL…GFMP), 274 to 294 (SLII…FFYL), and 324 to 344 (LILL…PLIL).

It belongs to the complex I subunit 2 family.

It is found in the mitochondrion inner membrane. The enzyme catalyses a ubiquinone + NADH + 5 H(+)(in) = a ubiquinol + NAD(+) + 4 H(+)(out). Core subunit of the mitochondrial membrane respiratory chain NADH dehydrogenase (Complex I) that is believed to belong to the minimal assembly required for catalysis. Complex I functions in the transfer of electrons from NADH to the respiratory chain. The immediate electron acceptor for the enzyme is believed to be ubiquinone. The sequence is that of NADH-ubiquinone oxidoreductase chain 2 (MT-ND2) from Scyliorhinus canicula (Small-spotted catshark).